Reading from the N-terminus, the 564-residue chain is Formate--tetrahydrofolate ligase (564 aa).

69 to 76 (TPAGEGKS) contacts ATP.

It belongs to the formate--tetrahydrofolate ligase family.

The enzyme catalyses (6S)-5,6,7,8-tetrahydrofolate + formate + ATP = (6R)-10-formyltetrahydrofolate + ADP + phosphate. It functions in the pathway one-carbon metabolism; tetrahydrofolate interconversion. The sequence is that of Formate--tetrahydrofolate ligase from Renibacterium salmoninarum (strain ATCC 33209 / DSM 20767 / JCM 11484 / NBRC 15589 / NCIMB 2235).